Reading from the N-terminus, the 280-residue chain is MSIDSLRDSIDRLWENREGLSSATTGEARDAVEEALRLLDSGQVRVAEPKAEGGWSVNQWLKKAVLLSFRLTDSTPAPGFGPVASYDKVPLKFEGWDQARFAQGGFRVVPGAVVRRSAYIAPGVVLMPSFVNVGAYVDSGTMIDTWATVGSCAQVGKNCHISGGTGIGGVLEPLQAGPVVIEDNVFIGARSEVAEGVVVEQGSVISMGVFIGASTKIIDRATGEVLYGRVPAYSVVVPGSLPGKPLPDGTPGPSLACAVIVKRVDERTRSKTSINELLRA.

The substrate site is built by Arg107 and Asp144.

Belongs to the transferase hexapeptide repeat family. Homotrimer.

The protein resides in the cytoplasm. It catalyses the reaction (S)-2,3,4,5-tetrahydrodipicolinate + succinyl-CoA + H2O = (S)-2-succinylamino-6-oxoheptanedioate + CoA. Its pathway is amino-acid biosynthesis; L-lysine biosynthesis via DAP pathway; LL-2,6-diaminopimelate from (S)-tetrahydrodipicolinate (succinylase route): step 1/3. This is 2,3,4,5-tetrahydropyridine-2,6-dicarboxylate N-succinyltransferase from Granulibacter bethesdensis (strain ATCC BAA-1260 / CGDNIH1).